Here is a 185-residue protein sequence, read N- to C-terminus: Ribosome-recycling factor (185 aa).

The protein belongs to the RRF family.

It localises to the cytoplasm. Responsible for the release of ribosomes from messenger RNA at the termination of protein biosynthesis. May increase the efficiency of translation by recycling ribosomes from one round of translation to another. The chain is Ribosome-recycling factor from Kocuria rhizophila (strain ATCC 9341 / DSM 348 / NBRC 103217 / DC2201).